An 896-amino-acid polypeptide reads, in one-letter code: Translation initiation factor IF-2 (896 aa).

Basic and acidic residues-rich tracts occupy residues Lys-94–Val-159 and Asp-166–Trp-219. Residues Lys-94–Lys-307 form a disordered region. Over residues Gly-256–Asn-271 the composition is skewed to basic residues. Over residues Lys-272 to Ala-285 the composition is skewed to basic and acidic residues. The 170-residue stretch at Pro-395–Lys-564 folds into the tr-type G domain. Residues Gly-404–Thr-411 form a G1 region. Position 404–411 (Gly-404–Thr-411) interacts with GTP. The G2 stretch occupies residues Gly-429–His-433. The interval Asp-450–Gly-453 is G3. GTP-binding positions include Asp-450–His-454 and Asn-504–Asp-507. The segment at Asn-504–Asp-507 is G4. The interval Ser-540–Lys-542 is G5.

Belongs to the TRAFAC class translation factor GTPase superfamily. Classic translation factor GTPase family. IF-2 subfamily.

The protein localises to the cytoplasm. In terms of biological role, one of the essential components for the initiation of protein synthesis. Protects formylmethionyl-tRNA from spontaneous hydrolysis and promotes its binding to the 30S ribosomal subunits. Also involved in the hydrolysis of GTP during the formation of the 70S ribosomal complex. This is Translation initiation factor IF-2 (infB) from Klebsiella oxytoca.